The following is a 151-amino-acid chain: Small ribosomal subunit protein uS13 (151 aa).

The protein belongs to the universal ribosomal protein uS13 family. As to quaternary structure, part of the 30S ribosomal subunit. Forms a loose heterodimer with protein S19. Forms two bridges to the 50S subunit in the 70S ribosome.

Functionally, located at the top of the head of the 30S subunit, it contacts several helices of the 16S rRNA. In the 70S ribosome it contacts the 23S rRNA (bridge B1a) and protein L5 of the 50S subunit (bridge B1b), connecting the 2 subunits; these bridges are implicated in subunit movement. This is Small ribosomal subunit protein uS13 from Hyperthermus butylicus (strain DSM 5456 / JCM 9403 / PLM1-5).